The chain runs to 105 residues: MADFLGMMKQAAQLQSKMKEMQSELDRIEVEGISGGGLVNVRMSAKMEVRAVKIDPSLLNPDEVGVLEDLLVSALADAHRKAEAAMQDKMKTLTGGLSLPPGLGL.

Belongs to the YbaB/EbfC family. As to quaternary structure, homodimer.

It localises to the cytoplasm. The protein localises to the nucleoid. Binds to DNA and alters its conformation. May be involved in regulation of gene expression, nucleoid organization and DNA protection. This chain is Nucleoid-associated protein RPE_4812, found in Rhodopseudomonas palustris (strain BisA53).